We begin with the raw amino-acid sequence, 288 residues long: NAD(P)H-hydrate epimerase (288 aa).

Residues 1–47 constitute a mitochondrion transit peptide; the sequence is MSRLRALLGLGLLVAGSRVPRIKSQTIACRSGPTWWGPQRLNSGGRW. At Ser49 the chain carries Phosphoserine. The region spanning 65-275 is the YjeF N-terminal domain; that stretch reads AQAVDQELFN…ALEKKYQLNL (211 aa). (6S)-NADPHX is bound at residue 119–123; the sequence is NNGGD. Asn120 contributes to the K(+) binding site. Lys144 carries the post-translational modification N6-succinyllysine. Asp185 lines the K(+) pocket. (6S)-NADPHX-binding positions include 189 to 195 and Asp218; that span reads GFSFKGD. Residue Ser221 participates in K(+) binding.

It belongs to the NnrE/AIBP family. In terms of assembly, homodimer. Interacts with APOA1 and APOA2. Requires K(+) as cofactor. Post-translationally, undergoes physiological phosphorylation during sperm capacitation, downstream to PKA activation. Ubiquitously expressed, with highest levels in kidney, heart and liver. Present in cerebrospinal fluid and urine but not in serum from healthy patients. Present in serum of sepsis patients (at protein level).

It is found in the mitochondrion. The protein localises to the secreted. The catalysed reaction is (6R)-NADHX = (6S)-NADHX. It catalyses the reaction (6R)-NADPHX = (6S)-NADPHX. Catalyzes the epimerization of the S- and R-forms of NAD(P)HX, a damaged form of NAD(P)H that is a result of enzymatic or heat-dependent hydration. This is a prerequisite for the S-specific NAD(P)H-hydrate dehydratase to allow the repair of both epimers of NAD(P)HX. Accelerates cholesterol efflux from endothelial cells to high-density lipoprotein (HDL) and thereby regulates angiogenesis. The protein is NAD(P)H-hydrate epimerase of Homo sapiens (Human).